A 207-amino-acid chain; its full sequence is Small ribosomal subunit protein uS2 (207 aa).

Belongs to the universal ribosomal protein uS2 family.

In Nitrosopumilus maritimus (strain SCM1), this protein is Small ribosomal subunit protein uS2.